The chain runs to 885 residues: Alanine--tRNA ligase (885 aa).

The Zn(2+) site is built by His-571, His-575, Cys-674, and His-678.

The protein belongs to the class-II aminoacyl-tRNA synthetase family. Zn(2+) is required as a cofactor.

It is found in the cytoplasm. It carries out the reaction tRNA(Ala) + L-alanine + ATP = L-alanyl-tRNA(Ala) + AMP + diphosphate. Its function is as follows. Catalyzes the attachment of alanine to tRNA(Ala) in a two-step reaction: alanine is first activated by ATP to form Ala-AMP and then transferred to the acceptor end of tRNA(Ala). Also edits incorrectly charged Ser-tRNA(Ala) and Gly-tRNA(Ala) via its editing domain. In Clavibacter sepedonicus (Clavibacter michiganensis subsp. sepedonicus), this protein is Alanine--tRNA ligase.